We begin with the raw amino-acid sequence, 829 residues long: Spindle-defective protein 2 (829 aa).

Disordered regions lie at residues 1 to 29 (MNED…DGES), 41 to 104 (EDED…SNDI), 183 to 294 (KKDV…TTSD), and 326 to 471 (RKKR…NGHM). A compositionally biased stretch (basic and acidic residues) spans 54–82 (FRLENRYKPSLHTPRELPTIREENREDVR). Polar residues predominate over residues 83–93 (SNTSSRVNTRP). The span at 183 to 216 (KKDVTRKQENVRPGKMMPEKVNDENEPKSRRFSP) shows a compositional bias: basic and acidic residues. Composition is skewed to polar residues over residues 217-230 (ERNT…NSTK) and 266-294 (PQRT…TTSD). Positions 314–332 (VDINLLTALENARKKRDRP) form a coiled coil. 2 stretches are compositionally biased toward low complexity: residues 361–370 (SMTSIVSSST) and 384–408 (NSAT…RVST). Polar residues-rich tracts occupy residues 409–439 (AKND…NSMT) and 448–463 (SVSS…STMT).

The protein localises to the cytoplasm. It is found in the cytoskeleton. It localises to the microtubule organizing center. The protein resides in the centrosome. Its subcellular location is the centriole. Required both for centrosome duplication and maturation. Required for pericentriolar material (PCM) recruitment. This chain is Spindle-defective protein 2, found in Caenorhabditis briggsae.